The chain runs to 456 residues: tRNA modification GTPase MnmE (456 aa).

(6S)-5-formyl-5,6,7,8-tetrahydrofolate contacts are provided by Arg-24, Glu-81, and Lys-120. Residues 216 to 379 (GMTVVIAGRP…LREHLKACMG (164 aa)) form the TrmE-type G domain. Asn-226 contributes to the K(+) binding site. GTP-binding positions include 226–231 (NAGKSS), 245–251 (TEIAGTT), 270–273 (DTAG), 335–338 (NKAD), and 359–361 (SAR). Ser-230 provides a ligand contact to Mg(2+). Residues Thr-245, Ile-247, and Thr-250 each contribute to the K(+) site. Residue Thr-251 coordinates Mg(2+). Position 456 (Lys-456) interacts with (6S)-5-formyl-5,6,7,8-tetrahydrofolate.

The protein belongs to the TRAFAC class TrmE-Era-EngA-EngB-Septin-like GTPase superfamily. TrmE GTPase family. Homodimer. Heterotetramer of two MnmE and two MnmG subunits. K(+) is required as a cofactor.

It localises to the cytoplasm. Functionally, exhibits a very high intrinsic GTPase hydrolysis rate. Involved in the addition of a carboxymethylaminomethyl (cmnm) group at the wobble position (U34) of certain tRNAs, forming tRNA-cmnm(5)s(2)U34. The sequence is that of tRNA modification GTPase MnmE from Pseudomonas syringae pv. tomato (strain ATCC BAA-871 / DC3000).